Here is a 448-residue protein sequence, read N- to C-terminus: N-succinylarginine dihydrolase (448 aa).

Substrate-binding positions include G19–S28, N110, and H137–R138. E174 is a catalytic residue. R214 provides a ligand contact to substrate. The active site involves H250. 2 residues coordinate substrate: D252 and N365. The active-site Nucleophile is the C371.

The protein belongs to the succinylarginine dihydrolase family. Homodimer.

It catalyses the reaction N(2)-succinyl-L-arginine + 2 H2O + 2 H(+) = N(2)-succinyl-L-ornithine + 2 NH4(+) + CO2. The protein operates within amino-acid degradation; L-arginine degradation via AST pathway; L-glutamate and succinate from L-arginine: step 2/5. Its function is as follows. Catalyzes the hydrolysis of N(2)-succinylarginine into N(2)-succinylornithine, ammonia and CO(2). This Ectopseudomonas mendocina (strain ymp) (Pseudomonas mendocina) protein is N-succinylarginine dihydrolase.